We begin with the raw amino-acid sequence, 264 residues long: Elongation factor Ts (264 aa).

Positions 76–79 (TDFV) are involved in Mg(2+) ion dislocation from EF-Tu.

It belongs to the EF-Ts family.

The protein resides in the cytoplasm. In terms of biological role, associates with the EF-Tu.GDP complex and induces the exchange of GDP to GTP. It remains bound to the aminoacyl-tRNA.EF-Tu.GTP complex up to the GTP hydrolysis stage on the ribosome. The chain is Elongation factor Ts from Deinococcus radiodurans (strain ATCC 13939 / DSM 20539 / JCM 16871 / CCUG 27074 / LMG 4051 / NBRC 15346 / NCIMB 9279 / VKM B-1422 / R1).